The primary structure comprises 201 residues: Recombination protein RecR (201 aa).

Residues 60–75 (CSCCGNVDTSDPCTIC) form a C4-type zinc finger. Residues 83-178 (ATLIVVEDVS…RVTRLAHGVP (96 aa)) enclose the Toprim domain.

This sequence belongs to the RecR family.

Its function is as follows. May play a role in DNA repair. It seems to be involved in an RecBC-independent recombinational process of DNA repair. It may act with RecF and RecO. The protein is Recombination protein RecR of Brucella melitensis biotype 1 (strain ATCC 23456 / CCUG 17765 / NCTC 10094 / 16M).